The primary structure comprises 59 residues: Metallothionein-1B (59 aa).

Residues 1 to 29 are beta; the sequence is MPGPCCNDKCVCQEGGCKAGCQCTSCRCS. 17 residues coordinate a divalent metal cation: C5, C6, C10, C17, C21, C23, C26, C28, C31, C34, C38, C40, C46, C50, C54, C56, and C57. The segment at 30 to 59 is alpha; it reads PCQKCTSGCKCATKEECSKTCTKPCSCCPK.

This sequence belongs to the metallothionein superfamily. Type 3 family.

Its function is as follows. Binds six divalent metal ions. Known to bind copper and cadmium. This chain is Metallothionein-1B, found in Callinectes sapidus (Blue crab).